Reading from the N-terminus, the 210-residue chain is Large ribosomal subunit protein uL3 (210 aa).

This sequence belongs to the universal ribosomal protein uL3 family. Part of the 50S ribosomal subunit. Forms a cluster with proteins L14 and L19.

One of the primary rRNA binding proteins, it binds directly near the 3'-end of the 23S rRNA, where it nucleates assembly of the 50S subunit. This chain is Large ribosomal subunit protein uL3, found in Amoebophilus asiaticus (strain 5a2).